Reading from the N-terminus, the 93-residue chain is Alpha-defensin 16 (93 aa).

An N-terminal signal peptide occupies residues 1–19 (MKTLILLSALVLLAFQVQA). The propeptide occupies 20-58 (DPIQNTDEETKTEEQPGEEDQAVSVSFGDPEGTSLQEES). Residues 22–54 (IQNTDEETKTEEQPGEEDQAVSVSFGDPEGTSL) form a disordered region. 3 disulfides stabilise this stretch: cysteine 64–cysteine 92, cysteine 66–cysteine 81, and cysteine 71–cysteine 91.

It belongs to the alpha-defensin family. As to expression, paneth cells of the small bowel.

It localises to the secreted. Probably contributes to the antimicrobial barrier function of the small bowel mucosa. This Mus musculus (Mouse) protein is Alpha-defensin 16 (Defa16).